We begin with the raw amino-acid sequence, 120 residues long: Ribonuclease P protein component 2 (120 aa).

It belongs to the eukaryotic/archaeal RNase P protein component 2 family. As to quaternary structure, consists of a catalytic RNA component and at least 4-5 protein subunits. Forms a subcomplex with Rnp3 which stimulates the catalytic RNA.

The protein resides in the cytoplasm. It carries out the reaction Endonucleolytic cleavage of RNA, removing 5'-extranucleotides from tRNA precursor.. Its function is as follows. Part of ribonuclease P, a protein complex that generates mature tRNA molecules by cleaving their 5'-ends. The RNA is catalytic, but its KM for pre-tRNA is 170-fold decreased in the presence of the 4 known protein subunits (Rnp1-4). The protein subunits also decrease the amount of Mg(2+) needed for activity. This chain is Ribonuclease P protein component 2, found in Pyrococcus furiosus (strain ATCC 43587 / DSM 3638 / JCM 8422 / Vc1).